The following is a 281-amino-acid chain: MDVRNKTLWILRDYVYILIGAAITAVSFNVFLLPNKIAAGGVSGISTILQSYGFEAAYVQWIINIPLFIAGVILLGGKFGLKTLAGSVFLPLVVFLTRDIQPATHHELLAAIFGGVGIGIGIGIVYLGKGSTGGTALAAQIIHKYSGLSLGKCLAIIDGMIVVTAMIVFNIEQGLYAMLGVYVSSKTIDVVQVGFNRSKMALIITKQEQAVKEAVLQKIDRGVTKISAVGGYTDDDRPILMCVVGQTEFTKLKQIVKQIDESAFVIVADASEVLGEGFKRA.

The next 5 helical transmembrane spans lie at 14–34 (YVYILIGAAITAVSFNVFLLP), 56–76 (AAYVQWIINIPLFIAGVILLG), 77–97 (GKFGLKTLAGSVFLPLVVFLT), 108–128 (LLAAIFGGVGIGIGIGIVYLG), and 149–169 (SLGKCLAIIDGMIVVTAMIVF).

The protein belongs to the UPF0750 family.

The protein resides in the cell membrane. The chain is UPF0750 membrane protein YvjA (yvjA) from Bacillus subtilis (strain 168).